Reading from the N-terminus, the 367-residue chain is Folliculin-like protein bhd1 (367 aa).

Disordered regions lie at residues 41 to 75 (RSIGVTENGNDSPEAFKNELDNRNNADSQSLQSST) and 92 to 115 (SKGPESPRVNSFHNSYSRNQSPIS). Residues 54–64 (EAFKNELDNRN) show a composition bias toward basic and acidic residues. 2 stretches are compositionally biased toward polar residues: residues 65-75 (NADSQSLQSST) and 99-115 (RVNSFHNSYSRNQSPIS). The region spanning 131–302 (FSVPDVQPRL…SNIGTAPSYE (172 aa)) is the uDENN FLCN/SMCR8-type domain.

It belongs to the folliculin family.

It localises to the nucleus. The protein localises to the cytoplasm. The polypeptide is Folliculin-like protein bhd1 (bhd1) (Schizosaccharomyces pombe (strain 972 / ATCC 24843) (Fission yeast)).